Reading from the N-terminus, the 255-residue chain is tRNA1(Val) (adenine(37)-N6)-methyltransferase (255 aa).

It belongs to the methyltransferase superfamily. tRNA (adenine-N(6)-)-methyltransferase family.

It is found in the cytoplasm. It carries out the reaction adenosine(37) in tRNA1(Val) + S-adenosyl-L-methionine = N(6)-methyladenosine(37) in tRNA1(Val) + S-adenosyl-L-homocysteine + H(+). In terms of biological role, specifically methylates the adenine in position 37 of tRNA(1)(Val) (anticodon cmo5UAC). The protein is tRNA1(Val) (adenine(37)-N6)-methyltransferase of Porphyromonas gingivalis (strain ATCC BAA-308 / W83).